We begin with the raw amino-acid sequence, 200 residues long: Pyrrolidone-carboxylate peptidase (200 aa).

Catalysis depends on residues glutamate 78, cysteine 141, and histidine 165.

Belongs to the peptidase C15 family. As to quaternary structure, homotetramer.

The protein localises to the cytoplasm. It catalyses the reaction Release of an N-terminal pyroglutamyl group from a polypeptide, the second amino acid generally not being Pro.. Removes 5-oxoproline from various penultimate amino acid residues except L-proline. The chain is Pyrrolidone-carboxylate peptidase from Thermococcus onnurineus (strain NA1).